The following is a 74-amino-acid chain: Cecropin-P2 (74 aa).

The N-terminal stretch at 1–13 (MIFIYLLVQTAES) is a signal peptide. The propeptide at 45 to 74 (RRRFVVQQDTISPRLEVDERFLPNSVQEQI) is removed in mature form.

This sequence belongs to the cecropin family. In terms of tissue distribution, expressed in the body wall, intestine, uterus and ovary.

It is found in the secreted. In terms of biological role, has antibacterial activity against several Gram-positive and Gram-negative bacteria. Is weakly active against yeasts. Acts by a nonpore mechanism. The sequence is that of Cecropin-P2 (ASCEC-2) from Ascaris suum (Pig roundworm).